A 56-amino-acid polypeptide reads, in one-letter code: Large ribosomal subunit protein bL33 (56 aa).

The protein belongs to the bacterial ribosomal protein bL33 family.

The protein is Large ribosomal subunit protein bL33 of Vibrio vulnificus (strain YJ016).